A 589-amino-acid chain; its full sequence is Transmembrane 9 superfamily member 5 (589 aa).

Residues 1 to 24 (MAQFLLTVLQVLLALTFWIGIGSG) form the signal peptide. The Lumenal portion of the chain corresponds to 25 to 227 (SSNHYNAGDH…SFHPISQKIH (203 aa)). The helical transmembrane segment at 228–248 (FFSFLNSITVVVLLIGLISFL) threads the bilayer. The Cytoplasmic segment spans residues 249–291 (FMRHLKNELRSYSIGDEEERKEAGWKLVHSDVFRCPRNISWLC). A helical membrane pass occupies residues 292–312 (AILGTGTQLLILIIALFALAF). At 313-321 (TGFLYPYNR) the chain is on the lumenal side. The helical transmembrane segment at 322–342 (GMLLTSLVIMYTLTSIVAGYT) threads the bilayer. Residues 343-361 (STSFHSQFEGNKQKRSVRL) are Cytoplasmic-facing. Residues 362 to 382 (AGILYPVPFFIILSVLNTVAI) form a helical membrane-spanning segment. The Lumenal segment spans residues 383–394 (TYGATAALPFGT). Residues 395 to 415 (IVIIILIFTLLNIPFLMLGGV) form a helical membrane-spanning segment. Topologically, residues 416 to 450 (LGNRFGLLEFQPPSAVKRNPREIPPQNWYRRKLYQ) are cytoplasmic. A helical transmembrane segment spans residues 451-471 (VFLGGFVPFSAVVLEWHQLYA). Residues 472 to 482 (SLWGFKIYTSP) lie on the Lumenal side of the membrane. Residues 483 to 503 (GIMLFTFIVLIFLSSSVGIIL) traverse the membrane as a helical segment. The Cytoplasmic portion of the chain corresponds to 504 to 518 (TYIQLSGEDHEWWWR). The helical transmembrane segment at 519–539 (SILCGGFTAVFMYGYGVLFYL) threads the bilayer. The Lumenal segment spans residues 540–550 (RSDMTGFLQLS). Residues 551–571 (FYLGYTALLCYALFLVLGTIS) traverse the membrane as a helical segment. Residues 572–589 (FLASLMFIRHIYRSVKLE) lie on the Cytoplasmic side of the membrane. Positions 578 to 583 (FIRHIY) match the Endoplasmic reticulum export signal motif. Positions 587–589 (KLE) match the Golgi retention signal motif.

This sequence belongs to the nonaspanin (TM9SF) (TC 9.A.2) family. As to expression, expressed in the root cap and in giant cells.

The protein localises to the endosome membrane. The protein resides in the golgi apparatus membrane. This chain is Transmembrane 9 superfamily member 5, found in Arabidopsis thaliana (Mouse-ear cress).